We begin with the raw amino-acid sequence, 179 residues long: Ribosome maturation factor RimM (179 aa).

The region spanning 96–175 (KDEYFWFDIE…IITVIGAMDI (80 aa)) is the PRC barrel domain.

It belongs to the RimM family. In terms of assembly, binds ribosomal protein uS19.

It localises to the cytoplasm. Its function is as follows. An accessory protein needed during the final step in the assembly of 30S ribosomal subunit, possibly for assembly of the head region. Essential for efficient processing of 16S rRNA. May be needed both before and after RbfA during the maturation of 16S rRNA. It has affinity for free ribosomal 30S subunits but not for 70S ribosomes. This chain is Ribosome maturation factor RimM, found in Sulfurimonas denitrificans (strain ATCC 33889 / DSM 1251) (Thiomicrospira denitrificans (strain ATCC 33889 / DSM 1251)).